The primary structure comprises 120 residues: Large ribosomal subunit protein bL17 (120 aa).

It belongs to the bacterial ribosomal protein bL17 family. As to quaternary structure, part of the 50S ribosomal subunit. Contacts protein L32.

The polypeptide is Large ribosomal subunit protein bL17 (Bacillus velezensis (strain DSM 23117 / BGSC 10A6 / LMG 26770 / FZB42) (Bacillus amyloliquefaciens subsp. plantarum)).